The following is a 133-amino-acid chain: Putative pre-16S rRNA nuclease (133 aa).

Belongs to the YqgF nuclease family.

The protein resides in the cytoplasm. Could be a nuclease involved in processing of the 5'-end of pre-16S rRNA. The sequence is that of Putative pre-16S rRNA nuclease from Bordetella pertussis (strain Tohama I / ATCC BAA-589 / NCTC 13251).